Reading from the N-terminus, the 59-residue chain is MAVPKRKTSPSRRGMRRSHDALSAEAFHECSNCGELKRPHMLCNACGHYNGREVIAVGL.

Residues 1–16 (MAVPKRKTSPSRRGMR) are compositionally biased toward basic residues. The disordered stretch occupies residues 1-20 (MAVPKRKTSPSRRGMRRSHD).

The protein belongs to the bacterial ribosomal protein bL32 family.

This is Large ribosomal subunit protein bL32 from Novosphingobium aromaticivorans (strain ATCC 700278 / DSM 12444 / CCUG 56034 / CIP 105152 / NBRC 16084 / F199).